The following is a 253-amino-acid chain: MNRASLEKRPDEVATMFDDVAPKYDVVNDVLSMGQTRRWRRIVVDAMDVKVGQKVLDLAAGTGTSSEPYADAGVDVVACDFSLGMLKVGKRRRPDIDFIAGDATNLPFADNSFDASTISFGLRNVVEPRKALEEMLRVTKPGGRLVIAEFSHPVVPLWRNLYTEYLMRALPAIATKVSSNPDAYVYLAESIRAWPDQDHLAQWLSDAGWTDITYRNLSGGIVAVHRAQKPDEHRESVPVAKLRRQIKPRHQAG.

Residues T62, D80, 102 to 103 (DA), and S119 contribute to the S-adenosyl-L-methionine site.

This sequence belongs to the class I-like SAM-binding methyltransferase superfamily. MenG/UbiE family.

The enzyme catalyses a 2-demethylmenaquinol + S-adenosyl-L-methionine = a menaquinol + S-adenosyl-L-homocysteine + H(+). Its pathway is quinol/quinone metabolism; menaquinone biosynthesis; menaquinol from 1,4-dihydroxy-2-naphthoate: step 2/2. Its function is as follows. Methyltransferase required for the conversion of demethylmenaquinol (DMKH2) to menaquinol (MKH2). The polypeptide is Demethylmenaquinone methyltransferase (Paenarthrobacter aurescens (strain TC1)).